We begin with the raw amino-acid sequence, 1011 residues long: Beta-galactosidase A (1011 aa).

A signal peptide spans 1 to 19 (MKLLSSWVVAALAAQAAGA). Substrate is bound by residues Tyr-96, 140-142 (NAE), and Asn-199. The active-site Proton donor is the Glu-200. Cystine bridges form between Cys-205–Cys-206 and Cys-267–Cys-316. The Nucleophile role is filled by Glu-299. Tyr-365 lines the substrate pocket. 7 N-linked (GlcNAc...) asparagine glycosylation sites follow: Asn-374, Asn-456, Asn-625, Asn-707, Asn-763, Asn-780, and Asn-917.

It belongs to the glycosyl hydrolase 35 family. In terms of assembly, monomer.

The protein resides in the secreted. The catalysed reaction is Hydrolysis of terminal non-reducing beta-D-galactose residues in beta-D-galactosides.. Its function is as follows. Cleaves beta-linked terminal galactosyl residues from gangliosides, glycoproteins, and glycosaminoglycans. Has high in vitro transglycosylation activity with p-nitrophenyl-beta-D-galactopyranoside, methyl-beta-D-galactopyranoside or lactose as a donor and galactose as an acceptor. The sequence is that of Beta-galactosidase A (lacA) from Penicillium sp.